We begin with the raw amino-acid sequence, 398 residues long: Phosphoglycerate kinase (398 aa).

Substrate-binding positions include 23–25, Arg38, 61–64, Arg122, and Arg155; these read DFN and HMGK. ATP contacts are provided by residues Lys206, Gly297, Glu328, and 354–357; that span reads GGDS.

The protein belongs to the phosphoglycerate kinase family. In terms of assembly, monomer.

It is found in the cytoplasm. It carries out the reaction (2R)-3-phosphoglycerate + ATP = (2R)-3-phospho-glyceroyl phosphate + ADP. It participates in carbohydrate degradation; glycolysis; pyruvate from D-glyceraldehyde 3-phosphate: step 2/5. This chain is Phosphoglycerate kinase, found in Clostridium botulinum (strain Langeland / NCTC 10281 / Type F).